The chain runs to 128 residues: Glycine cleavage system H protein (128 aa).

The 83-residue stretch at 25–107 folds into the Lipoyl-binding domain; sequence TITVGITHHA…YGAGWFFKIK (83 aa). The residue at position 66 (K66) is an N6-lipoyllysine.

Belongs to the GcvH family. The glycine cleavage system is composed of four proteins: P, T, L and H. The cofactor is (R)-lipoate.

Its function is as follows. The glycine cleavage system catalyzes the degradation of glycine. The H protein shuttles the methylamine group of glycine from the P protein to the T protein. The sequence is that of Glycine cleavage system H protein from Neisseria meningitidis serogroup C (strain 053442).